A 440-amino-acid polypeptide reads, in one-letter code: Protein naked cuticle homolog 1 (440 aa).

Gly2 carries N-myristoyl glycine lipidation. The 36-residue stretch at 129–164 folds into the EF-hand domain; it reads EEDNRQEWTFTLYDFDNNGKVTREDITSLLHTIYEV. Residues Asp142, Asp144, Asn146, Lys148, and Asp153 each coordinate Ca(2+). Polar residues predominate over residues 192–204; that stretch reads RWKNCTQTNTDTP. Disordered regions lie at residues 192 to 221, 272 to 379, and 421 to 440; these read RWKN…KTSE, AAPA…QRPK, and RHEH…FYQS. Basic and acidic residues predominate over residues 211 to 221; it reads EKCIEDSKTSE. Residues 272 to 293 are compositionally biased toward low complexity; the sequence is AAPATEPAKPTHATRSSNQSRS. Positions 324-336 are enriched in basic residues; that stretch reads RHTHALRSPKTHR. The segment covering 352–362 has biased composition (pro residues); sequence APPPPSVPNQT. The segment covering 422-440 has biased composition (basic residues); that stretch reads HEHHHHHEHHHHYHHFYQS.

The protein belongs to the NKD family.

It localises to the cell membrane. The protein localises to the cytoplasm. Its function is as follows. Cell autonomous antagonist of the canonical Wnt signaling pathway. May activate a second Wnt signaling pathway that controls planar cell polarity. The polypeptide is Protein naked cuticle homolog 1 (nkd1) (Danio rerio (Zebrafish)).